The following is a 159-amino-acid chain: MNPVGINGTLIVQLVTFVILVALLYKYMYGPLRKVMDDRRAKIADGLAAAERGKEEMALAQKRATELLREAKDKAAEIIANAERRGVELREEAQGKAREEADRIIASARAEIDVETNRAREVLRGQVVELVVNGTQRILHREIDDQTHRDIIDRMVGQL.

Residues 4 to 24 (VGINGTLIVQLVTFVILVALL) traverse the membrane as a helical segment.

The protein belongs to the ATPase B chain family. F-type ATPases have 2 components, F(1) - the catalytic core - and F(0) - the membrane proton channel. F(1) has five subunits: alpha(3), beta(3), gamma(1), delta(1), epsilon(1). F(0) has three main subunits: a(1), b(2) and c(10-14). The alpha and beta chains form an alternating ring which encloses part of the gamma chain. F(1) is attached to F(0) by a central stalk formed by the gamma and epsilon chains, while a peripheral stalk is formed by the delta and b chains.

Its subcellular location is the cell inner membrane. F(1)F(0) ATP synthase produces ATP from ADP in the presence of a proton or sodium gradient. F-type ATPases consist of two structural domains, F(1) containing the extramembraneous catalytic core and F(0) containing the membrane proton channel, linked together by a central stalk and a peripheral stalk. During catalysis, ATP synthesis in the catalytic domain of F(1) is coupled via a rotary mechanism of the central stalk subunits to proton translocation. Its function is as follows. Component of the F(0) channel, it forms part of the peripheral stalk, linking F(1) to F(0). The protein is ATP synthase subunit b of Acidithiobacillus ferrooxidans (strain ATCC 23270 / DSM 14882 / CIP 104768 / NCIMB 8455) (Ferrobacillus ferrooxidans (strain ATCC 23270)).